Consider the following 581-residue polypeptide: Adenine deaminase (581 aa).

The protein belongs to the metallo-dependent hydrolases superfamily. Adenine deaminase family. The cofactor is Mn(2+).

It catalyses the reaction adenine + H2O + H(+) = hypoxanthine + NH4(+). This Lysinibacillus sphaericus (strain C3-41) protein is Adenine deaminase.